The chain runs to 509 residues: Legumin A (509 aa).

Residues 1 to 21 (MAINPSLLFLSLLFLFNGCLA) form the signal peptide. 2 disulfides stabilise this stretch: Cys34–Cys67 and Cys110–Cys331. The 235-residue stretch at 39 to 273 (LRASAPQTRI…AFNVDHDIIR (235 aa)) folds into the Cupin type-1 1 domain. 2 disordered regions span residues 187–248 (AGNP…ESSS) and 298–325 (PRME…QDNG). Residues 212–228 (EESEEEEGEGEEEEEED) are compositionally biased toward acidic residues. The span at 299 to 314 (RMEEEEREERQQEQRY) shows a compositional bias: basic and acidic residues. The region spanning 337–486 (ENLADPERAD…SYQVSREDAR (150 aa)) is the Cupin type-1 2 domain.

This sequence belongs to the 11S seed storage protein (globulins) family. As to quaternary structure, hexamer; each subunit is composed of an acidic and a basic chain derived from a single precursor and linked by a disulfide bond.

Functionally, this is a seed storage protein. In Gossypium hirsutum (Upland cotton), this protein is Legumin A (LEGA).